We begin with the raw amino-acid sequence, 757 residues long: Exo-alpha-(1-&gt;6)-L-arabinopyranosidase (757 aa).

The active site involves Asp232.

The protein belongs to the glycosyl hydrolase 3 family. Homotetramer.

With respect to regulation, completely inhibited by Cu(2+) and activated by Co(2+). Its function is as follows. Catalyzes the hydrolysis of a non-reducing terminal alpha-L-arabinopyranosidic linkage in ginsenoside Rb2 (alpha-L-arabinopyranosyl-(1-&gt;6)-alpha-D-glucopyranosyl) to release alpha-D-glucopyranosyl (Rd). It is not able to hydrolyze alpha-L-arabinofuranosyl-(1-&gt;6)-alpha-D-glucopyranosyl (Rc). This Bifidobacterium longum protein is Exo-alpha-(1-&gt;6)-L-arabinopyranosidase (apy).